A 417-amino-acid polypeptide reads, in one-letter code: UDP-N-acetylglucosamine 1-carboxyvinyltransferase (417 aa).

Phosphoenolpyruvate is bound at residue 22–23 (KN). Arg92 serves as a coordination point for UDP-N-acetyl-alpha-D-glucosamine. Residue Cys116 is the Proton donor of the active site. Residue Cys116 is modified to 2-(S-cysteinyl)pyruvic acid O-phosphothioketal. Residues Asp304 and Ile326 each contribute to the UDP-N-acetyl-alpha-D-glucosamine site.

Belongs to the EPSP synthase family. MurA subfamily.

The protein localises to the cytoplasm. The catalysed reaction is phosphoenolpyruvate + UDP-N-acetyl-alpha-D-glucosamine = UDP-N-acetyl-3-O-(1-carboxyvinyl)-alpha-D-glucosamine + phosphate. It participates in cell wall biogenesis; peptidoglycan biosynthesis. Cell wall formation. Adds enolpyruvyl to UDP-N-acetylglucosamine. The chain is UDP-N-acetylglucosamine 1-carboxyvinyltransferase from Geotalea daltonii (strain DSM 22248 / JCM 15807 / FRC-32) (Geobacter daltonii).